We begin with the raw amino-acid sequence, 573 residues long: DNA ligase (573 aa).

Residue Glu250 coordinates ATP. Lys252 acts as the N6-AMP-lysine intermediate in catalysis. Positions 257, 272, 301, 342, 432, and 438 each coordinate ATP.

Belongs to the ATP-dependent DNA ligase family. Mg(2+) serves as cofactor.

The catalysed reaction is ATP + (deoxyribonucleotide)n-3'-hydroxyl + 5'-phospho-(deoxyribonucleotide)m = (deoxyribonucleotide)n+m + AMP + diphosphate.. Functionally, DNA ligase that seals nicks in double-stranded DNA during DNA replication, DNA recombination and DNA repair. The chain is DNA ligase from Methanococcus maripaludis (strain C6 / ATCC BAA-1332).